Here is an 87-residue protein sequence, read N- to C-terminus: U3-theraphotoxin-Hhn1f (87 aa).

A signal peptide spans 1 to 24 (MVNMKASMFLTSAGLVLLFVVCYA). Positions 25 to 52 (SESEEKEFPKEMLSSIFAVDNDFKQEER) are excised as a propeptide. Intrachain disulfides connect C54–C67, C61–C72, and C66–C79.

The protein belongs to the neurotoxin 10 (Hwtx-1) family. 51 (Hntx-8) subfamily. Hntx-8 sub-subfamily. Expressed by the venom gland.

The protein localises to the secreted. Its function is as follows. Ion channel inhibitor. The polypeptide is U3-theraphotoxin-Hhn1f (Cyriopagopus hainanus (Chinese bird spider)).